We begin with the raw amino-acid sequence, 287 residues long: MAVGKEIKTKIASVKGTQKITSAMEMVAASKMRKAQEGMAASRPYATNIRNVIGHIALGNLEYRHPYMDEREAKRVGYIVVSSDRGLCGGLNINLFKKVLADAAEKQASGAEVEFCVIGSKATAFFNNMGAKVSAQISGLGDSPSLTDLVGSVAVMLKAYDNGEIDRLHVVYNKFVNTMTQEPTIDQLLPLPKSDDEAISHRWDYIYEPDANSLLDQLLVRYIESQVYQGVVENIACEQASRMVSMKAATDNAGDLIDDLQLVYNKARQAAITQELGEIVAGAAAVG.

Belongs to the ATPase gamma chain family. In terms of assembly, F-type ATPases have 2 components, CF(1) - the catalytic core - and CF(0) - the membrane proton channel. CF(1) has five subunits: alpha(3), beta(3), gamma(1), delta(1), epsilon(1). CF(0) has three main subunits: a, b and c.

The protein localises to the cell inner membrane. Its function is as follows. Produces ATP from ADP in the presence of a proton gradient across the membrane. The gamma chain is believed to be important in regulating ATPase activity and the flow of protons through the CF(0) complex. In Colwellia maris, this protein is ATP synthase gamma chain.